We begin with the raw amino-acid sequence, 598 residues long: Aspartate--tRNA(Asp/Asn) ligase (598 aa).

Glutamate 170 contributes to the L-aspartate binding site. The tract at residues 194 to 197 (QLFK) is aspartate. Arginine 216 lines the L-aspartate pocket. ATP is bound by residues 216–218 (RDE) and glutamine 225. Histidine 448 contributes to the L-aspartate binding site. Position 482 (glutamate 482) interacts with ATP. An L-aspartate-binding site is contributed by arginine 489. Residue 534 to 537 (GWDR) coordinates ATP. The disordered stretch occupies residues 558–598 (GGGVDPLTDAPAPITPQQRKESGIDAKPREDKPKEDAKSKA). Residues 575–598 (QRKESGIDAKPREDKPKEDAKSKA) show a composition bias toward basic and acidic residues.

The protein belongs to the class-II aminoacyl-tRNA synthetase family. Type 1 subfamily. In terms of assembly, homodimer.

Its subcellular location is the cytoplasm. It carries out the reaction tRNA(Asx) + L-aspartate + ATP = L-aspartyl-tRNA(Asx) + AMP + diphosphate. In terms of biological role, aspartyl-tRNA synthetase with relaxed tRNA specificity since it is able to aspartylate not only its cognate tRNA(Asp) but also tRNA(Asn). Reaction proceeds in two steps: L-aspartate is first activated by ATP to form Asp-AMP and then transferred to the acceptor end of tRNA(Asp/Asn). This chain is Aspartate--tRNA(Asp/Asn) ligase, found in Mycolicibacterium smegmatis (strain ATCC 700084 / mc(2)155) (Mycobacterium smegmatis).